A 499-amino-acid chain; its full sequence is Probable cytosol aminopeptidase (499 aa).

Mn(2+)-binding residues include Lys271 and Asp276. The active site involves Lys283. The Mn(2+) site is built by Asp294, Asp353, and Glu355. The active site involves Arg357.

This sequence belongs to the peptidase M17 family. Mn(2+) is required as a cofactor.

It is found in the cytoplasm. It carries out the reaction Release of an N-terminal amino acid, Xaa-|-Yaa-, in which Xaa is preferably Leu, but may be other amino acids including Pro although not Arg or Lys, and Yaa may be Pro. Amino acid amides and methyl esters are also readily hydrolyzed, but rates on arylamides are exceedingly low.. The catalysed reaction is Release of an N-terminal amino acid, preferentially leucine, but not glutamic or aspartic acids.. In terms of biological role, presumably involved in the processing and regular turnover of intracellular proteins. Catalyzes the removal of unsubstituted N-terminal amino acids from various peptides. This Bordetella parapertussis (strain 12822 / ATCC BAA-587 / NCTC 13253) protein is Probable cytosol aminopeptidase.